Reading from the N-terminus, the 259-residue chain is MSRREDGRLDDELRPVVITRGFTSHPAGSVLVEFGQTRVMCTASVTEGVPRWRKGSGQGWLTAEYAMLPAATHDRSDRESVKGRIGGRTQEISRLIGRSLRACIDLAALGENTIAIDCDVLQADGGTRTAAITGAYVALSDAVTWLAAAGRLSDPRPLSCAIAAVSVGVVDGRVRVDLPYSEDSRAEVDMNVVATDTGTLVEIQGTGEGATFPRSTLDKMLDAALGATEQLFVLQREALDAPYPGVLPEGPAPKKAFGS.

Residues Arg88 and 126–128 each bind phosphate; that span reads GTR.

It belongs to the RNase PH family. Homohexameric ring arranged as a trimer of dimers.

It catalyses the reaction tRNA(n+1) + phosphate = tRNA(n) + a ribonucleoside 5'-diphosphate. Phosphorolytic 3'-5' exoribonuclease that plays an important role in tRNA 3'-end maturation. Removes nucleotide residues following the 3'-CCA terminus of tRNAs; can also add nucleotides to the ends of RNA molecules by using nucleoside diphosphates as substrates, but this may not be physiologically important. Probably plays a role in initiation of 16S rRNA degradation (leading to ribosome degradation) during starvation. This Mycolicibacterium smegmatis (strain ATCC 700084 / mc(2)155) (Mycobacterium smegmatis) protein is Ribonuclease PH.